A 256-amino-acid chain; its full sequence is 3-deoxy-manno-octulosonate cytidylyltransferase (256 aa).

The protein belongs to the KdsB family.

The protein resides in the cytoplasm. It catalyses the reaction 3-deoxy-alpha-D-manno-oct-2-ulosonate + CTP = CMP-3-deoxy-beta-D-manno-octulosonate + diphosphate. Its pathway is nucleotide-sugar biosynthesis; CMP-3-deoxy-D-manno-octulosonate biosynthesis; CMP-3-deoxy-D-manno-octulosonate from 3-deoxy-D-manno-octulosonate and CTP: step 1/1. It participates in bacterial outer membrane biogenesis; lipopolysaccharide biosynthesis. In terms of biological role, activates KDO (a required 8-carbon sugar) for incorporation into bacterial lipopolysaccharide in Gram-negative bacteria. The sequence is that of 3-deoxy-manno-octulosonate cytidylyltransferase from Histophilus somni (strain 2336) (Haemophilus somnus).